The primary structure comprises 132 residues: Cytochrome b5 (132 aa).

Residues 2–78 (GKIFTLAEVA…LDEYYVGDID (77 aa)) enclose the Cytochrome b5 heme-binding domain. Heme is bound by residues histidine 37 and histidine 61. Residues 104–124 (FVIKLLQFLVPLVILAGAIGI) traverse the membrane as a helical segment.

The protein belongs to the cytochrome b5 family.

It localises to the endoplasmic reticulum membrane. Its subcellular location is the microsome membrane. Its function is as follows. Membrane bound hemoprotein which function as an electron carrier for several membrane bound oxygenases. The polypeptide is Cytochrome b5 (Borago officinalis (Bourrache)).